We begin with the raw amino-acid sequence, 181 residues long: Protein canopy homolog 1 (181 aa).

The N-terminal stretch at 1 to 21 (MAILLHFGVLITAFLSSHVEG) is a signal peptide. The Saposin B-type domain maps to 25-177 (PILYCGACRA…EETGLCKEYL (153 aa)). Cystine bridges form between Cys29/Cys173, Cys32/Cys166, and Cys87/Cys139. A Prevents secretion from ER motif is present at residues 178–181 (HNEL).

Belongs to the canopy family.

It is found in the endoplasmic reticulum. Functionally, plays an role in early embryonic development. The sequence is that of Protein canopy homolog 1 (cnpy1) from Xenopus laevis (African clawed frog).